Here is a 255-residue protein sequence, read N- to C-terminus: DASH complex subunit SPC34 (255 aa).

Residues 53 to 81 form a disordered region; sequence LFSVPPPPPRQTTLTAEQQQQQKPSNRRQ. Over residues 63–81 the composition is skewed to polar residues; the sequence is QTTLTAEQQQQQKPSNRRQ. Residues 176-248 adopt a coiled-coil conformation; the sequence is LAYYEAKIAE…QARLRALDAD (73 aa).

The protein belongs to the DASH complex SPC34 family. Component of the DASH complex consisting of ASK1, DAD1, DAD2, DAD3, DAD4, DAM1, DUO1, HSK3, SPC19 and SPC34, with a stoichiometry of one copy of each subunit per complex. Multiple DASH complexes oligomerize to form a ring that encircles spindle microtubules and organizes the rod-like NDC80 complexes of the outer kinetochore of the outer kinetochore. DASH complex oligomerization strengthens microtubule attachments. On cytoplasmic microtubules, DASH complexes appear to form patches instead of rings.

The protein localises to the nucleus. The protein resides in the cytoplasm. Its subcellular location is the cytoskeleton. It is found in the spindle. It localises to the chromosome. The protein localises to the centromere. The protein resides in the kinetochore. Its function is as follows. Component of the DASH complex that connects microtubules with kinetochores and couples microtubule depolymerisation to chromosome movement; it is involved in retrieving kinetochores to the spindle poles before their re-orientation on the spindle in early mitosis and allows microtubule depolymerization to pull chromosomes apart and resist detachment during anaphase. Kinetochores, consisting of a centromere-associated inner segment and a microtubule-contacting outer segment, play a crucial role in chromosome segregation by mediating the physical connection between centromeric DNA and microtubules. Kinetochores also serve as an input point for the spindle assembly checkpoint, which delays anaphase until all chromosomes have bioriented on the mitotic spindle. The chain is DASH complex subunit SPC34 from Chaetomium thermophilum (strain DSM 1495 / CBS 144.50 / IMI 039719) (Thermochaetoides thermophila).